Consider the following 89-residue polypeptide: Small ribosomal subunit protein bS20 (89 aa).

It belongs to the bacterial ribosomal protein bS20 family.

Its function is as follows. Binds directly to 16S ribosomal RNA. The chain is Small ribosomal subunit protein bS20 from Xanthobacter autotrophicus (strain ATCC BAA-1158 / Py2).